The following is a 512-amino-acid chain: Citrate synthase (512 aa).

Active-site residues include His288, His327, and Asp383. The segment at 483-512 is disordered; sequence AIPKTATGSKSQLSASIEQSFGEKISPQSH. The span at 488–501 shows a compositional bias: polar residues; it reads ATGSKSQLSASIEQ.

The protein belongs to the citrate synthase family.

The protein resides in the cytoplasm. It carries out the reaction oxaloacetate + acetyl-CoA + H2O = citrate + CoA + H(+). Its pathway is carbohydrate metabolism; tricarboxylic acid cycle; isocitrate from oxaloacetate: step 1/2. This Dictyostelium discoideum (Social amoeba) protein is Citrate synthase (gltA).